The following is an 863-amino-acid chain: Leucine--tRNA ligase (863 aa).

The 'HIGH' region signature appears at 40–51; that stretch reads PYPSGAGLHVGH. Residues 635–639 carry the 'KMSKS' region motif; the sequence is KMSKS. K638 provides a ligand contact to ATP.

Belongs to the class-I aminoacyl-tRNA synthetase family.

It is found in the cytoplasm. It carries out the reaction tRNA(Leu) + L-leucine + ATP = L-leucyl-tRNA(Leu) + AMP + diphosphate. This chain is Leucine--tRNA ligase, found in Leptospira interrogans serogroup Icterohaemorrhagiae serovar copenhageni (strain Fiocruz L1-130).